The primary structure comprises 2664 residues: Non-reducing polyketide synthase sorB (2664 aa).

The segment at 21–45 (KSAPQSGNTADDIPNAASQPDTTST) is disordered. Residues 36–45 (AASQPDTTST) show a composition bias toward polar residues. The segment at 112–281 (ADHARRLAEW…TTPSRIASDL (170 aa)) is N-terminal acylcarrier protein transacylase domain (SAT). Cys184 acts as the Nucleophile; for transacylase activity in catalysis. Catalysis depends on His302, which acts as the Proton donor/acceptor; for transacylase activity. In terms of domain architecture, Ketosynthase family 3 (KS3) spans 428–849 (DNDIAVIGMS…GSNASMVIKQ (422 aa)). Residues Cys596, His731, and His772 each act as for beta-ketoacyl synthase activity in the active site. The malonyl-CoA:ACP transacylase (MAT) domain stretch occupies residues 961–1276 (CFGGQVSKSV…TQGTRQLADV (316 aa)). Positions 1345–1477 (PGLYTFMGYG…GQLEFHRADD (133 aa)) are N-terminal hotdog fold. The region spanning 1345-1663 (PGLYTFMGYG…FSARSMSELF (319 aa)) is the PKS/mFAS DH domain. A product template (PT) domain region spans residues 1376–1548 (VSGYTLGKTV…PSESAGRAVK (173 aa)). Positions 1507 to 1663 (DEVIQGQSIY…FSARSMSELF (157 aa)) are C-terminal hotdog fold. The Carrier domain occupies 1711-1785 (TELWAKLLPV…GILAFLQSTL (75 aa)). Residue Ser1745 is modified to O-(pantetheine 4'-phosphoryl)serine. A disordered region spans residues 1789–1820 (GEDDASQSSDAASSSRNTPPSSNDGILATPSP). Residues 1794-1803 (SQSSDAASSS) are compositionally biased toward low complexity. A methyltransferase domain region spans residues 2015 to 2197 (FQLMADFLSR…DAGYKHVEWT (183 aa)). The interval 2281–2526 (VTGTTGSLGS…TLRSFPAVEG (246 aa)) is NADPH-binding (R) domain.

It depends on pantetheine 4'-phosphate as a cofactor.

The protein operates within secondary metabolite biosynthesis. Non-reducing polyketide synthase; part of the gene cluster that mediates the biosynthesis of sorbicillinoids, a diverse group of yellow secondary metabolites that restrict growth of competing pathogenic fungi but not of bacteria. Sorbicillinoids biosynthesis requires the action of two PKSs. SorA iteratively combines three acetyl units and the growing chain is modified by the ketoacyl reductase subunit, and optional by the enoyl reductase subunit in the second cycle. The polyketide is then handed over to the PKS SorB, which adds three more acetyl units, and two methyl groups. SorB releases an aldehyde, which undergoes spontaneous cyclization resulting in the formation of sorbicillin or 2',3'-dihydrosorbicillin. The monooxygenase sorC oxidizes sorbicillin and 2',3'-dihydrosorbicillin to 2',3'-dihydrosorbicillinol and sorbicillinol, respectively. The oxidoreductase sorD further converts sorbicillinol into oxosorbicillinol. Sorbicillinol is the building block for the other sorbicillinoids such as disorbicillinol, bisvertinolon, and dihydrobisvertinolone. This chain is Non-reducing polyketide synthase sorB, found in Penicillium rubens (strain ATCC 28089 / DSM 1075 / NRRL 1951 / Wisconsin 54-1255) (Penicillium chrysogenum).